Reading from the N-terminus, the 103-residue chain is Large ribosomal subunit protein bL28 (103 aa).

Belongs to the bacterial ribosomal protein bL28 family.

The protein is Large ribosomal subunit protein bL28 of Anaplasma phagocytophilum (strain HZ).